We begin with the raw amino-acid sequence, 229 residues long: 2,3-bisphosphoglycerate-dependent phosphoglycerate mutase (229 aa).

Substrate is bound by residues 7–14 (RHGQSEWN), 20–21 (TG), arginine 59, 86–89 (ERHY), lysine 97, 113–114 (RR), and 182–183 (GN). The Tele-phosphohistidine intermediate role is filled by histidine 8. Glutamate 86 serves as the catalytic Proton donor/acceptor.

This sequence belongs to the phosphoglycerate mutase family. BPG-dependent PGAM subfamily.

It catalyses the reaction (2R)-2-phosphoglycerate = (2R)-3-phosphoglycerate. Its pathway is carbohydrate degradation; glycolysis; pyruvate from D-glyceraldehyde 3-phosphate: step 3/5. Its function is as follows. Catalyzes the interconversion of 2-phosphoglycerate and 3-phosphoglycerate. The protein is 2,3-bisphosphoglycerate-dependent phosphoglycerate mutase of Listeria monocytogenes serotype 4b (strain F2365).